A 120-amino-acid chain; its full sequence is Glycine cleavage system H protein (120 aa).

Residues 17-99 (VATVGITAHA…QGDGWLYRLK (83 aa)) enclose the Lipoyl-binding domain. Lys58 is modified (N6-lipoyllysine).

The protein belongs to the GcvH family. As to quaternary structure, the glycine cleavage system is composed of four proteins: P, T, L and H. (R)-lipoate serves as cofactor.

In terms of biological role, the glycine cleavage system catalyzes the degradation of glycine. The H protein shuttles the methylamine group of glycine from the P protein to the T protein. This chain is Glycine cleavage system H protein, found in Methylorubrum extorquens (strain PA1) (Methylobacterium extorquens).